The primary structure comprises 408 residues: Acetate kinase (408 aa).

Asn-7 is a binding site for Mg(2+). Lys-14 contacts ATP. Arg-91 contributes to the substrate binding site. Asp-148 acts as the Proton donor/acceptor in catalysis. ATP contacts are provided by residues His-208–Gly-212, Asp-283–Arg-285, and Gly-331–Asn-335. Position 384 (Glu-384) interacts with Mg(2+).

It belongs to the acetokinase family. Homodimer. Mg(2+) serves as cofactor. Mn(2+) is required as a cofactor.

The protein resides in the cytoplasm. It catalyses the reaction acetate + ATP = acetyl phosphate + ADP. The protein operates within metabolic intermediate biosynthesis; acetyl-CoA biosynthesis; acetyl-CoA from acetate: step 1/2. In terms of biological role, catalyzes the formation of acetyl phosphate from acetate and ATP. Can also catalyze the reverse reaction. The chain is Acetate kinase from Methanosarcina barkeri (strain Fusaro / DSM 804).